The chain runs to 450 residues: tRNA modification GTPase MnmE (450 aa).

(6S)-5-formyl-5,6,7,8-tetrahydrofolate contacts are provided by Arg-23, Glu-79, and Lys-118. One can recognise a TrmE-type G domain in the interval 214–374 (GITLILVGKP…LKEHILNKVG (161 aa)). Asn-224 contacts K(+). Residues 224–229 (NAGKSS), 243–249 (TSIAGTT), and 268–271 (DTAG) each bind GTP. Position 228 (Ser-228) interacts with Mg(2+). K(+)-binding residues include Thr-243, Ile-245, and Thr-248. Position 249 (Thr-249) interacts with Mg(2+). Lys-450 provides a ligand contact to (6S)-5-formyl-5,6,7,8-tetrahydrofolate.

The protein belongs to the TRAFAC class TrmE-Era-EngA-EngB-Septin-like GTPase superfamily. TrmE GTPase family. Homodimer. Heterotetramer of two MnmE and two MnmG subunits. The cofactor is K(+).

The protein resides in the cytoplasm. Functionally, exhibits a very high intrinsic GTPase hydrolysis rate. Involved in the addition of a carboxymethylaminomethyl (cmnm) group at the wobble position (U34) of certain tRNAs, forming tRNA-cmnm(5)s(2)U34. The polypeptide is tRNA modification GTPase MnmE (Francisella tularensis subsp. novicida (strain U112)).